The sequence spans 452 residues: RNA polymerase II-associated protein rba50 (452 aa).

Disordered stretches follow at residues 60-83 (LRKN…IDEE), 125-202 (EREL…QTKR), and 223-261 (PIKG…PLEF). Residues 125–135 (ERELAQRKDRS) show a composition bias toward basic and acidic residues. Positions 136–154 (SQVNTPDLSQRPSDDSFLS) are enriched in polar residues. A compositionally biased stretch (basic and acidic residues) spans 156-165 (EKLRSSEKLN). The segment covering 170–191 (SVLSSEAVDSSSGSPSPPMALS) has biased composition (low complexity).

The protein belongs to the RPAP1 family. Interacts with RNA polymerase II.

Its subcellular location is the cytoplasm. The protein resides in the nucleus. Its function is as follows. Forms an interface between the RNA polymerase II enzyme and chaperone/scaffolding proteins, suggesting that it is required to connect RNA polymerase II to regulators of protein complex formation. In Schizosaccharomyces pombe (strain 972 / ATCC 24843) (Fission yeast), this protein is RNA polymerase II-associated protein rba50 (rba50).